Here is a 325-residue protein sequence, read N- to C-terminus: 7,8-didemethyl-8-hydroxy-5-deazariboflavin synthase (325 aa).

Positions 1 to 241 constitute a Radical SAM core domain; the sequence is MTYSKNVFVP…SDIAVQVAPN (241 aa). The [4Fe-4S] cluster site is built by Cys-15, Cys-19, and Cys-22.

It belongs to the radical SAM superfamily. CofG family. In terms of assembly, consists of two subunits, CofG and CofH. It depends on [4Fe-4S] cluster as a cofactor.

It carries out the reaction 5-amino-5-(4-hydroxybenzyl)-6-(D-ribitylimino)-5,6-dihydrouracil + S-adenosyl-L-methionine = 7,8-didemethyl-8-hydroxy-5-deazariboflavin + 5'-deoxyadenosine + L-methionine + NH4(+) + H(+). It functions in the pathway cofactor biosynthesis; coenzyme F0 biosynthesis. Functionally, catalyzes the radical-mediated synthesis of 7,8-didemethyl-8-hydroxy-5-deazariboflavin from 5-amino-5-(4-hydroxybenzyl)-6-(D-ribitylimino)-5,6-dihydrouracil. The sequence is that of 7,8-didemethyl-8-hydroxy-5-deazariboflavin synthase from Methanosarcina barkeri (strain Fusaro / DSM 804).